The chain runs to 279 residues: Urease accessory protein UreD (279 aa).

It belongs to the UreD family. In terms of assembly, ureD, UreF and UreG form a complex that acts as a GTP-hydrolysis-dependent molecular chaperone, activating the urease apoprotein by helping to assemble the nickel containing metallocenter of UreC. The UreE protein probably delivers the nickel.

The protein localises to the cytoplasm. Its function is as follows. Required for maturation of urease via the functional incorporation of the urease nickel metallocenter. This is Urease accessory protein UreD from Trichormus variabilis (strain ATCC 29413 / PCC 7937) (Anabaena variabilis).